A 270-amino-acid polypeptide reads, in one-letter code: Diaminopimelate epimerase (270 aa).

Positions 15, 49, and 66 each coordinate substrate. Catalysis depends on Cys-75, which acts as the Proton donor. Substrate-binding positions include 76–77 (GN), Asn-155, Asn-187, and 204–205 (ER). Residue Cys-213 is the Proton acceptor of the active site. Residue 214–215 (GS) participates in substrate binding.

This sequence belongs to the diaminopimelate epimerase family. Homodimer.

The protein resides in the cytoplasm. It catalyses the reaction (2S,6S)-2,6-diaminopimelate = meso-2,6-diaminopimelate. It participates in amino-acid biosynthesis; L-lysine biosynthesis via DAP pathway; DL-2,6-diaminopimelate from LL-2,6-diaminopimelate: step 1/1. In terms of biological role, catalyzes the stereoinversion of LL-2,6-diaminopimelate (L,L-DAP) to meso-diaminopimelate (meso-DAP), a precursor of L-lysine and an essential component of the bacterial peptidoglycan. The protein is Diaminopimelate epimerase of Rickettsia conorii (strain ATCC VR-613 / Malish 7).